Here is a 600-residue protein sequence, read N- to C-terminus: Probable tripeptidyl-peptidase SED4 (600 aa).

The first 22 residues, 1 to 22, serve as a signal peptide directing secretion; it reads MVSFTLRAIGACLIGLPALITA. Positions 23–202 are cleaved as a propeptide — removed in mature form; it reads APTSHVSNDF…SVFTSDLEIT (180 aa). 2 N-linked (GlcNAc...) asparagine glycosylation sites follow: asparagine 210 and asparagine 281. Residues 212 to 600 form the Peptidase S53 domain; sequence TITPDCIREL…FEKLSKLVLI (389 aa). Residues glutamate 288 and aspartate 292 each act as charge relay system in the active site. Asparagine 323 and asparagine 404 each carry an N-linked (GlcNAc...) asparagine glycan. Serine 504 serves as the catalytic Charge relay system. Residues aspartate 546 and isoleucine 547 each contribute to the Ca(2+) site. N-linked (GlcNAc...) asparagine glycosylation occurs at asparagine 575. Ca(2+)-binding residues include glycine 579 and aspartate 581.

Ca(2+) is required as a cofactor.

It localises to the secreted. It is found in the extracellular space. It carries out the reaction Release of an N-terminal tripeptide from a polypeptide.. Its function is as follows. Secreted tripeptidyl-peptidase which degrades proteins at acidic pHs and is involved in virulence. The polypeptide is Probable tripeptidyl-peptidase SED4 (SED4) (Arthroderma benhamiae (strain ATCC MYA-4681 / CBS 112371) (Trichophyton mentagrophytes)).